A 1141-amino-acid chain; its full sequence is DNA polymerase 120R (1141 aa).

This sequence belongs to the DNA polymerase type-B family.

The enzyme catalyses DNA(n) + a 2'-deoxyribonucleoside 5'-triphosphate = DNA(n+1) + diphosphate. Its function is as follows. DNA-directed DNA polymerase involved in viral DNA replication. The chain is DNA polymerase 120R from Invertebrate iridescent virus 3 (IIV-3).